A 128-amino-acid chain; its full sequence is Sulfurtransferase TusD (128 aa).

The Cysteine persulfide intermediate role is filled by Cys78.

It belongs to the DsrE/TusD family. Heterohexamer, formed by a dimer of trimers. The hexameric TusBCD complex contains 2 copies each of TusB, TusC and TusD. The TusBCD complex interacts with TusE.

The protein localises to the cytoplasm. In terms of biological role, part of a sulfur-relay system required for 2-thiolation of 5-methylaminomethyl-2-thiouridine (mnm(5)s(2)U) at tRNA wobble positions. Accepts sulfur from TusA and transfers it in turn to TusE. The sequence is that of Sulfurtransferase TusD from Klebsiella pneumoniae subsp. pneumoniae (strain ATCC 700721 / MGH 78578).